The primary structure comprises 741 residues: Catalase-peroxidase 2 (741 aa).

Positions Met1–Ala28 are cleaved as a signal peptide. Positions Trp107 to Tyr228 form a cross-link, tryptophyl-tyrosyl-methioninium (Trp-Tyr) (with M-254). The active-site Proton acceptor is the His108. Residues Tyr228–Met254 constitute a cross-link (tryptophyl-tyrosyl-methioninium (Tyr-Met) (with W-107)). His269 lines the heme b pocket.

The protein belongs to the peroxidase family. Peroxidase/catalase subfamily. In terms of assembly, homodimer or homotetramer. It depends on heme b as a cofactor. In terms of processing, formation of the three residue Trp-Tyr-Met cross-link is important for the catalase, but not the peroxidase activity of the enzyme.

It catalyses the reaction H2O2 + AH2 = A + 2 H2O. The enzyme catalyses 2 H2O2 = O2 + 2 H2O. Functionally, bifunctional enzyme with both catalase and broad-spectrum peroxidase activity. This chain is Catalase-peroxidase 2, found in Burkholderia ambifaria (strain ATCC BAA-244 / DSM 16087 / CCUG 44356 / LMG 19182 / AMMD) (Burkholderia cepacia (strain AMMD)).